We begin with the raw amino-acid sequence, 120 residues long: MIKMVIVVRSDIKMGKGKIAAQVAHAAVTLVVSIINSNNLRWKEWLNEWLHQGQPKIIVKVNSLDEIISRAKKAETMNLPFSIIEDAGKTQLEPGTITCLGIGPAPENLVDSITGDLKLL.

Belongs to the PTH2 family. Homodimer.

It is found in the cytoplasm. The enzyme catalyses an N-acyl-L-alpha-aminoacyl-tRNA + H2O = an N-acyl-L-amino acid + a tRNA + H(+). Functionally, the natural substrate for this enzyme may be peptidyl-tRNAs which drop off the ribosome during protein synthesis. This Saccharolobus solfataricus (strain ATCC 35092 / DSM 1617 / JCM 11322 / P2) (Sulfolobus solfataricus) protein is Peptidyl-tRNA hydrolase.